A 405-amino-acid polypeptide reads, in one-letter code: Argininosuccinate synthase (405 aa).

ATP contacts are provided by residues 10 to 18 (AYSGGVDTS) and Ala38. Tyr89 contacts L-citrulline. Residue Gly119 participates in ATP binding. 3 residues coordinate L-aspartate: Thr121, Asn125, and Asp126. An L-citrulline-binding site is contributed by Asn125. Residues Arg129, Ser177, Ser186, Glu262, and Tyr274 each contribute to the L-citrulline site.

Belongs to the argininosuccinate synthase family. Type 1 subfamily. In terms of assembly, homotetramer.

The protein resides in the cytoplasm. The enzyme catalyses L-citrulline + L-aspartate + ATP = 2-(N(omega)-L-arginino)succinate + AMP + diphosphate + H(+). It functions in the pathway amino-acid biosynthesis; L-arginine biosynthesis; L-arginine from L-ornithine and carbamoyl phosphate: step 2/3. The protein is Argininosuccinate synthase of Synechococcus sp. (strain RCC307).